Reading from the N-terminus, the 261-residue chain is Hemin import ATP-binding protein HmuV (261 aa).

In terms of domain architecture, ABC transporter spans Leu-3–Ala-239. Gly-35–Thr-42 contacts ATP.

This sequence belongs to the ABC transporter superfamily. Heme (hemin) importer (TC 3.A.1.14.5) family. In terms of assembly, the complex is composed of two ATP-binding proteins (HmuV), two transmembrane proteins (HmuU) and a solute-binding protein (HmuT).

The protein localises to the cell inner membrane. In terms of biological role, part of the ABC transporter complex HmuTUV involved in hemin import. Responsible for energy coupling to the transport system. This Roseobacter denitrificans (strain ATCC 33942 / OCh 114) (Erythrobacter sp. (strain OCh 114)) protein is Hemin import ATP-binding protein HmuV.